The following is an 880-amino-acid chain: Valine--tRNA ligase (880 aa).

The 'HIGH' region signature appears at 51 to 61; sequence PNVTGELHLGH. The short motif at 529–533 is the 'KMSKS' region element; the sequence is KMSKT. Lys532 contacts ATP. Residues 815–854 adopt a coiled-coil conformation; sequence MSTMVDLEVEAKRVKAEISELEIQIERLSTRLSDEQFLAK.

The protein belongs to the class-I aminoacyl-tRNA synthetase family. ValS type 1 subfamily. Monomer.

It is found in the cytoplasm. The catalysed reaction is tRNA(Val) + L-valine + ATP = L-valyl-tRNA(Val) + AMP + diphosphate. Catalyzes the attachment of valine to tRNA(Val). As ValRS can inadvertently accommodate and process structurally similar amino acids such as threonine, to avoid such errors, it has a 'posttransfer' editing activity that hydrolyzes mischarged Thr-tRNA(Val) in a tRNA-dependent manner. This Dehalococcoides mccartyi (strain CBDB1) protein is Valine--tRNA ligase.